A 271-amino-acid polypeptide reads, in one-letter code: uncharacterized protein (271 aa).

This sequence belongs to the anhydro-N-acetylmuramic acid kinase family.

This is an uncharacterized protein from Yersinia enterocolitica.